The following is a 64-amino-acid chain: Movement protein TGBp3 (64 aa).

The Lumenal segment spans residues 1–7 (MSLSYLD). The helical transmembrane segment at 8-28 (LLLAFGCVLAVSVIVNCFLVS) threads the bilayer. Residues 29–64 (HNNCVIEITGEAVRISGCTFDRTFVELVKGLKPARH) lie on the Cytoplasmic side of the membrane.

It belongs to the Tymovirales TGBp3 protein family.

It localises to the host endoplasmic reticulum membrane. Its function is as follows. Plays a role in viral cell-to-cell propagation, by facilitating genome transport to neighboring plant cells through plasmosdesmata. May induce the formation of granular vesicles derived from the Endoplasmic reticulum, which align on actin filaments. The polypeptide is Movement protein TGBp3 (Chrysanthemum morifolium (Florist's daisy)).